The following is a 596-amino-acid chain: Putative terpene synthase 2, chloroplastic (596 aa).

A chloroplast-targeting transit peptide spans 1–46 (MATLSMQVSTLSKQVKNLNTFGMGSASKLPMVARRVSTTRLRPICS). The Mn(2+) site is built by D349 and D353. The DDXXD motif signature appears at 349–353 (DDVYD). 2 homodimerization regions span residues 355–361 (YGTLDEL) and 427–464 (EAKW…FTLP). Mn(2+) contacts are provided by D493 and E501.

It belongs to the terpene synthase family. Homodimer. It depends on Mn(2+) as a cofactor. Mg(2+) serves as cofactor.

The protein localises to the plastid. The protein resides in the chloroplast. The protein operates within secondary metabolite biosynthesis; terpenoid biosynthesis. Functionally, putative monoterpene synthase inactive on geranyl diphosphate (GPP). This is Putative terpene synthase 2, chloroplastic from Thymus vulgaris (Thyme).